An 886-amino-acid chain; its full sequence is Microsomal triacylglycerol transfer protein (886 aa).

The signal sequence occupies residues 1–27; sequence MENKNKKCLRTLLLLALFLGLLEDGKT. In terms of domain architecture, Vitellogenin spans 30–653; that stretch reads IAPNSQQIFK…SQASSFKLGI (624 aa). Residues asparagine 358, asparagine 484, asparagine 502, and asparagine 616 are each glycosylated (N-linked (GlcNAc...) asparagine).

Its subcellular location is the endoplasmic reticulum. It localises to the golgi apparatus. The catalysed reaction is a 1,2-diacyl-sn-glycero-3-phosphocholine(in) = a 1,2-diacyl-sn-glycero-3-phosphocholine(out). It catalyses the reaction a 1,2-diacyl-sn-glycero-3-phosphoethanolamine(in) = a 1,2-diacyl-sn-glycero-3-phosphoethanolamine(out). In terms of biological role, catalyzes the transport of phospholipids such as phosphatidylethanolamine (1,2-diacyl-sn-glycero-3-phosphoethanolamine) and phosphatidylcholine (1,2-diacyl-sn-glycero-3-phosphocholine) between membranes. Required for the assembly and secretion of plasma lipoproteins that contain apolipoprotein B. The protein is Microsomal triacylglycerol transfer protein of Drosophila melanogaster (Fruit fly).